The primary structure comprises 420 residues: Mannose-1-phosphate guanylyltransferase regulatory subunit alpha (420 aa).

Residues 2 to 251 are substrate-binding domain; the sequence is LKAVILIGGP…DGIWSQIKSA (250 aa). Residues E85 and Q247 each contribute to the GDP-alpha-D-mannose site. Residues 273–420 form a hexapeptide repeat domain region; the sequence is LARHTAGGPR…SRSFTNQIIL (148 aa). Residues 356–384 are C-loop; the sequence is TPNDPNPNDPRARMDSESLFKDGKLLPAI.

The protein belongs to the transferase hexapeptide repeat family. In terms of assembly, component of the GMPPA-GMPPB mannose-1-phosphate guanylyltransferase complex composed of 4 GMPPA subunits and 8 GMPPB subunits; the complex is organized into three layers, a central layer made up of 2 GMPPA dimers sandwiched between two layers each made up of 2 GMPPB dimers.

It localises to the cytoplasm. In terms of biological role, regulatory subunit of the GMPPA-GMPPB mannose-1-phosphate guanylyltransferase complex; reduces the catalytic activity of GMPPB when part of the complex. Mediates allosteric feedback inhibition of GMPPB catalytic activity upon binding GDP-alpha-D-mannose. Together with GMPPB regulates GDP-alpha-D-mannose levels. This is Mannose-1-phosphate guanylyltransferase regulatory subunit alpha (Gmppa) from Rattus norvegicus (Rat).